The sequence spans 216 residues: Small ribosomal subunit protein uS3c (216 aa).

In terms of domain architecture, KH type-2 spans 43–118 (IKNYIQKNRR…RLKIAITRVE (76 aa)).

This sequence belongs to the universal ribosomal protein uS3 family. Part of the 30S ribosomal subunit.

The protein resides in the plastid. It is found in the chloroplast. The protein is Small ribosomal subunit protein uS3c (rps3) of Dioscorea elephantipes (Elephant's foot yam).